Consider the following 438-residue polypeptide: Flagellum-specific ATP synthase (438 aa).

The tract at residues 119-139 is disordered; that stretch reads GLSPVSTEQSPPNPMKRPPIR. ATP is bound at residue 165–172; the sequence is AGSGVGKS.

It belongs to the ATPase alpha/beta chains family.

The protein localises to the cytoplasm. It carries out the reaction ATP + H2O + 4 H(+)(in) = ADP + phosphate + 5 H(+)(out). In terms of biological role, probable catalytic subunit of a protein translocase for flagellum-specific export, or a proton translocase involved in local circuits at the flagellum. This chain is Flagellum-specific ATP synthase (fliI), found in Bacillus subtilis (strain 168).